A 55-amino-acid polypeptide reads, in one-letter code: Omega-ctenitoxin-Pr2a (55 aa).

5 disulfides stabilise this stretch: cysteine 2–cysteine 16, cysteine 9–cysteine 22, cysteine 15–cysteine 37, cysteine 24–cysteine 35, and cysteine 45–cysteine 52.

Expressed by the venom gland.

The protein resides in the secreted. Antagonist of L-type calcium channels (Cav1/CACNA1). In vivo, causes paralysis in posterior limbs, and gradual decrease in movement and aggression during 24 hours after intracerebroventricular injection in mice at dose levels of 3 ug per mouse. This is Omega-ctenitoxin-Pr2a from Phoneutria reidyi (Brazilian Amazonian armed spider).